Consider the following 76-residue polypeptide: Cytochrome c oxidase subunit 6C-2 (76 aa).

Topologically, residues 4-14 (GALLPKPQMRG) are mitochondrial matrix. A helical transmembrane segment spans residues 15-55 (LLAKRLRVHIVGAFVVALGVAAAYKFGVAEPRKKAYADFYR). The Mitochondrial intermembrane segment spans residues 56–76 (NYDSMKDFEEMRQAGVFQSAK). Phosphoserine is present on serine 74.

The protein belongs to the cytochrome c oxidase subunit 6c family. As to quaternary structure, component of the cytochrome c oxidase (complex IV, CIV), a multisubunit enzyme composed of 14 subunits. The complex is composed of a catalytic core of 3 subunits MT-CO1, MT-CO2 and MT-CO3, encoded in the mitochondrial DNA, and 11 supernumerary subunits COX4I, COX5A, COX5B, COX6A, COX6B, COX6C, COX7A, COX7B, COX7C, COX8 and NDUFA4, which are encoded in the nuclear genome. The complex exists as a monomer or a dimer and forms supercomplexes (SCs) in the inner mitochondrial membrane with NADH-ubiquinone oxidoreductase (complex I, CI) and ubiquinol-cytochrome c oxidoreductase (cytochrome b-c1 complex, complex III, CIII), resulting in different assemblies (supercomplex SCI(1)III(2)IV(1) and megacomplex MCI(2)III(2)IV(2)).

Its subcellular location is the mitochondrion inner membrane. It functions in the pathway energy metabolism; oxidative phosphorylation. Component of the cytochrome c oxidase, the last enzyme in the mitochondrial electron transport chain which drives oxidative phosphorylation. The respiratory chain contains 3 multisubunit complexes succinate dehydrogenase (complex II, CII), ubiquinol-cytochrome c oxidoreductase (cytochrome b-c1 complex, complex III, CIII) and cytochrome c oxidase (complex IV, CIV), that cooperate to transfer electrons derived from NADH and succinate to molecular oxygen, creating an electrochemical gradient over the inner membrane that drives transmembrane transport and the ATP synthase. Cytochrome c oxidase is the component of the respiratory chain that catalyzes the reduction of oxygen to water. Electrons originating from reduced cytochrome c in the intermembrane space (IMS) are transferred via the dinuclear copper A center (CU(A)) of subunit 2 and heme A of subunit 1 to the active site in subunit 1, a binuclear center (BNC) formed by heme A3 and copper B (CU(B)). The BNC reduces molecular oxygen to 2 water molecules using 4 electrons from cytochrome c in the IMS and 4 protons from the mitochondrial matrix. The sequence is that of Cytochrome c oxidase subunit 6C-2 (Cox6c2) from Rattus norvegicus (Rat).